A 519-amino-acid chain; its full sequence is Glucoamylase GLA1 (519 aa).

An N-terminal signal peptide occupies residues methionine 1–arginine 27. N-linked (GlcNAc...) asparagine glycans are attached at residues asparagine 115 and asparagine 127. Substrate is bound at residue tryptophan 166. Asparagine 205 carries an N-linked (GlcNAc...) asparagine glycan. Catalysis depends on aspartate 234, which acts as the Proton acceptor. The active-site Proton donor is the glutamate 237.

It belongs to the glycosyl hydrolase 15 family.

It carries out the reaction Hydrolysis of terminal (1-&gt;4)-linked alpha-D-glucose residues successively from non-reducing ends of the chains with release of beta-D-glucose.. This chain is Glucoamylase GLA1 (GLA1), found in Saccharomycopsis fibuligera (Yeast).